The following is a 118-amino-acid chain: Vitelline membrane protein Vm32E (118 aa).

Residues 1-17 (MKIVALTLVAFVALAGA) form the signal peptide. One can recognise a VM domain in the interval 36–75 (GYPAPPCPTNYLFSCQPNLAPAPCAQEAQAPAYGSAGAYT).

Belongs to the vitelline membrane family.

It is found in the secreted. In terms of biological role, major early eggshell protein. The chain is Vitelline membrane protein Vm32E from Drosophila simulans (Fruit fly).